The following is a 117-amino-acid chain: Large ribosomal subunit protein uL18 (117 aa).

Belongs to the universal ribosomal protein uL18 family. In terms of assembly, part of the 50S ribosomal subunit; part of the 5S rRNA/L5/L18/L25 subcomplex. Contacts the 5S and 23S rRNAs.

In terms of biological role, this is one of the proteins that bind and probably mediate the attachment of the 5S RNA into the large ribosomal subunit, where it forms part of the central protuberance. The chain is Large ribosomal subunit protein uL18 from Methylococcus capsulatus (strain ATCC 33009 / NCIMB 11132 / Bath).